Reading from the N-terminus, the 62-residue chain is Weak neurotoxin 5 (62 aa).

Disulfide bonds link cysteine 3–cysteine 24, cysteine 6–cysteine 11, cysteine 17–cysteine 40, cysteine 44–cysteine 54, and cysteine 55–cysteine 60.

Belongs to the three-finger toxin family. Ancestral subfamily. Orphan group II sub-subfamily. Expressed by the venom gland.

It localises to the secreted. In terms of biological role, binds with low affinity to muscular (alpha-1-beta-1-delta-epsilon/CHRNA1-CHRNB1-CHRND-CHRNE) and very low affinity to neuronal (alpha-7/CHRNA7) nicotinic acetylcholine receptor (nAChR). The chain is Weak neurotoxin 5 from Naja naja (Indian cobra).